Here is a 120-residue protein sequence, read N- to C-terminus: UPF0231 protein YacL (120 aa).

This sequence belongs to the UPF0231 family.

In Escherichia coli O139:H28 (strain E24377A / ETEC), this protein is UPF0231 protein YacL.